Here is a 1162-residue protein sequence, read N- to C-terminus: Reticulon-4 (1162 aa).

Methionine 1 bears the N-acetylmethionine mark. Positions 1-183 (MEDIDQSSLV…ALPAASEPVI (183 aa)) are disordered. Topologically, residues 1 to 988 (MEDIDQSSLV…LYWRDIKKTG (988 aa)) are cytoplasmic. Residues serine 7 and serine 16 each carry the phosphoserine modification. Low complexity predominate over residues 7 to 16 (SSLVSSSADS). Residues 31-54 (EPEDEEDEEDEEEEEDDEDLEELE) show a composition bias toward acidic residues. Positions 85-99 (PPAPRGPLPAAPPTA) are enriched in pro residues. Serine 105 carries the post-translational modification Phosphoserine. The segment covering 109 to 127 (SPAASAPSLPPAAAVLPSK) has biased composition (low complexity). A phosphoserine mark is found at serine 145, serine 165, serine 167, serine 329, and serine 344. The residue at position 348 (threonine 348) is a Phosphothreonine. A compositionally biased stretch (basic and acidic residues) spans 408-422 (SLEQKGHGKDSESRN). The interval 408–432 (SLEQKGHGKDSESRNENASFPRTPE) is disordered. Phosphoserine is present on serine 426. Threonine 430 carries the post-translational modification Phosphothreonine. Phosphoserine occurs at positions 489, 690, 727, 768, and 832. A disordered region spans residues 711–730 (ELVDDSSPESEPVDLFSDDS). Positions 713–730 (VDDSSPESEPVDLFSDDS) are enriched in acidic residues. Threonine 834 is subject to Phosphothreonine. 2 positions are modified to phosphoserine: serine 857 and serine 961. In terms of domain architecture, Reticulon spans 975–1162 (VVDLLYWRDI…KIPGLKRKAE (188 aa)). The helical transmembrane segment at 989–1009 (VVFGASLFLLLSLTVFSIVSV) threads the bilayer. Residues 1010-1078 (TAYIALALLS…VNSTIKELRR (69 aa)) lie on the Lumenal side of the membrane. Lysine 1074 is subject to N6-acetyllysine. The chain crosses the membrane as a helical span at residues 1079-1099 (LFLVDDLVDSLKFAVLMWVFT). Topologically, residues 1100–1162 (YVGALFNGLT…KIPGLKRKAE (63 aa)) are cytoplasmic.

In terms of assembly, binds to RTN4R. Interacts with ATL1. Interacts with TMEM170A. Interacts with RTN4IP1. Interacts in trans with CNTNAP1. Interacts with REEP5. Interacts with GPR50. Interacts with synaptic plasticity regulator PANTS; the interaction results in enhanced RTN4-mediated inhibition of AMPA receptor clustering. As to quaternary structure, homodimer. Interacts with BAD/Bcl-xl and BCL2. Interact with RTN3. Interacts with NGBR. Interacts with SPTLC1. Interacts with GRAMD4. Interacts with CDH5. Interacts with BACE1 and BACE2. Interacts with REEP5. Interacts with RETREG3. In terms of assembly, interacts with BACE1 and BACE2. Interacts with TMEM33. Expressed in cardiomyocytes (at protein level). Highly expressed in brain but not deteceted in aorta, femoral and carotid arteries. Main isoform expressed in neurons. As to expression, expressed in cardiomyocytes (at protein level). Expressed in splenocytes, T-cells, B-cells, bone marrow derived dendritic cells and macrophages (at protein level). Expressed in neurons. Highly expressed in endothelial cells and vascular smooth muscle cells, including blood vessels and mesenteric arteries. Expressed in bronchial and alveolar epithelial cells as well as vascular endothelial cells of lungs. In terms of tissue distribution, expressed in B-cells, bone marrow dendritic cells and macrophages (at protein level). Expressed in cardiomyocytes. As to expression, expressed at very low levels in neurons.

The protein localises to the endoplasmic reticulum membrane. It localises to the cell membrane. The protein resides in the synapse. It is found in the cell junction. Its function is as follows. Required to induce the formation and stabilization of endoplasmic reticulum (ER) tubules. They regulate membrane morphogenesis in the ER by promoting tubular ER production. They influence nuclear envelope expansion, nuclear pore complex formation and proper localization of inner nuclear membrane proteins. However each isoform have specific functions mainly depending on their tissue expression specificities. In terms of biological role, developmental neurite growth regulatory factor with a role as a negative regulator of axon-axon adhesion and growth, and as a facilitator of neurite branching. Regulates neurite fasciculation, branching and extension in the developing nervous system. Involved in down-regulation of growth, stabilization of wiring and restriction of plasticity in the adult CNS. Regulates the radial migration of cortical neurons via an RTN4R-LINGO1 containing receptor complex. Acts as a negative regulator of central nervous system angiogenesis. Inhibits spreading, migration and sprouting of primary brain microvascular endothelial cells (MVECs). Also induces the retraction of MVECs lamellipodia and filopodia in a ROCK pathway-dependent manner. Mainly function in endothelial cells and vascular smooth muscle cells, is also involved in immune system regulation. Modulator of vascular remodeling, promotes the migration of endothelial cells but inhibits the migration of vascular smooth muscle cells. Regulates endothelial sphingolipid biosynthesis with direct effects on vascular function and blood pressure. Inhibits serine palmitoyltransferase, SPTLC1, the rate-limiting enzyme of the novo sphingolipid biosynthetic pathway, thereby controlling production of endothelial sphingosine-1-phosphate (S1P). Required to promote macrophage homing and functions such as cytokine/chemokine gene expression involved in angiogenesis, arteriogenesis and tissue repair. Mediates ICAM1 induced transendothelial migration of leukocytes such as monocytes and neutrophils and acute inflammation. Necessary for immune responses triggered by nucleic acid sensing TLRs, such as TLR9, is required for proper TLR9 location to endolysosomes. Also involved in immune response to LPS. Plays a role in liver regeneration through the modulation of hepatocytes proliferation. Reduces the anti-apoptotic activity of Bcl-xl and Bcl-2. This is likely consecutive to their change in subcellular location, from the mitochondria to the endoplasmic reticulum, after binding and sequestration. With isoform C, inhibits BACE1 activity and amyloid precursor protein processing. Functionally, regulates cardiomyocyte apoptosis upon hypoxic conditions. With isoform B, inhibits BACE1 activity and amyloid precursor protein processing. The chain is Reticulon-4 from Mus musculus (Mouse).